A 220-amino-acid polypeptide reads, in one-letter code: U1 small nuclear ribonucleoprotein C (220 aa).

The segment at 4–36 (YYCDYCDIYLTHDSMNARKAHNSGRNHVANVRD) adopts a Matrin-type zinc-finger fold. Composition is skewed to pro residues over residues 88–130 (PGPP…PFLP) and 147–165 (PPFP…PFRP). The disordered stretch occupies residues 88-220 (PGPPPPGAFP…HPDRLRMLGQ (133 aa)). Residues 166–200 (PMGMGMPPAPAQAQAQGSPMGMPQQGQQGTFTPTQ) show a composition bias toward low complexity. Residues 211–220 (HPDRLRMLGQ) show a composition bias toward basic and acidic residues.

The protein belongs to the U1 small nuclear ribonucleoprotein C family. As to quaternary structure, U1 snRNP is composed of the 7 core Sm proteins B/B', D1, D2, D3, E, F and G that assemble in a heptameric protein ring on the Sm site of the small nuclear RNA to form the core snRNP, and at least 3 U1 snRNP-specific proteins U1-70K, U1-A and U1-C. U1-C interacts with U1 snRNA and the 5' splice-site region of the pre-mRNA.

The protein localises to the nucleus. Functionally, component of the spliceosomal U1 snRNP, which is essential for recognition of the pre-mRNA 5' splice-site and the subsequent assembly of the spliceosome. U1-C is directly involved in initial 5' splice-site recognition for both constitutive and regulated alternative splicing. The interaction with the 5' splice-site seems to precede base-pairing between the pre-mRNA and the U1 snRNA. Stimulates commitment or early (E) complex formation by stabilizing the base pairing of the 5' end of the U1 snRNA and the 5' splice-site region. This chain is U1 small nuclear ribonucleoprotein C, found in Cryptococcus neoformans var. neoformans serotype D (strain JEC21 / ATCC MYA-565) (Filobasidiella neoformans).